The chain runs to 152 residues: Transcriptional regulator MraZ (152 aa).

SpoVT-AbrB domains are found at residues 5–52 (ATMV…PLPE) and 81–124 (ASEC…DEQT).

This sequence belongs to the MraZ family. Forms oligomers.

Its subcellular location is the cytoplasm. It localises to the nucleoid. Functionally, negatively regulates its own expression and that of the subsequent genes in the proximal part of the division and cell wall (dcw) gene cluster. Acts by binding directly to DNA. May also regulate the expression of genes outside the dcw cluster. This Yersinia pseudotuberculosis serotype O:1b (strain IP 31758) protein is Transcriptional regulator MraZ.